We begin with the raw amino-acid sequence, 1088 residues long: RNA-directed RNA polymerase (1088 aa).

One can recognise a RdRp catalytic domain in the interval 501-687 (LSYGDVTRFL…AKRYLAGGKI (187 aa)).

It belongs to the reoviridae RNA-directed RNA polymerase family. In terms of assembly, interacts with VP3 (Potential). Interacts with VP2; this interaction activates VP1. Interacts with NSP5; this interaction is probably necessary for the formation of functional virus factories. Interacts with NSP2; this interaction is weak. Mg(2+) is required as a cofactor.

The protein localises to the virion. The catalysed reaction is RNA(n) + a ribonucleoside 5'-triphosphate = RNA(n+1) + diphosphate. Its function is as follows. RNA-directed RNA polymerase that is involved in both transcription and genome replication. Together with VP3 capping enzyme, forms an enzyme complex positioned near the channels situated at each of the five-fold vertices of the core. Following infection, the outermost layer of the virus is lost, leaving a double-layered particle (DLP) made up of the core and VP6 shell. VP1 then catalyzes the transcription of fully conservative plus-strand genomic RNAs that are extruded through the DLP's channels into the cytoplasm where they function as mRNAs for translation of viral proteins. One copy of each of the viral (+)RNAs is also recruited during core assembly, together with newly synthesized polymerase complexes and VP2. The polymerase of these novo-formed particles catalyzes the synthesis of complementary minus-strands leading to dsRNA formation. To do so, the polymerase specifically recognizes and binds 4 bases 5'-UGUG-3' in the conserved 3'-sequence of plus-strand RNA templates. VP2 presumably activates the autoinhibited VP1-RNA complex to coordinate packaging and genome replication. Once dsRNA synthesis is complete, the polymerase switches to the transcriptional mode, thus providing secondary transcription. The protein is RNA-directed RNA polymerase of Rotavirus A (strain RVA/Human/Japan/KU/1995/G1P1A[8]) (RV-A).